A 1403-amino-acid polypeptide reads, in one-letter code: DNA-directed RNA polymerase subunit beta' (1403 aa).

Positions 71, 73, 86, and 89 each coordinate Zn(2+). Mg(2+) contacts are provided by aspartate 462, aspartate 464, and aspartate 466. Residues cysteine 820, cysteine 893, cysteine 900, and cysteine 903 each coordinate Zn(2+).

It belongs to the RNA polymerase beta' chain family. In terms of assembly, the RNAP catalytic core consists of 2 alpha, 1 beta, 1 beta' and 1 omega subunit. When a sigma factor is associated with the core the holoenzyme is formed, which can initiate transcription. Mg(2+) serves as cofactor. The cofactor is Zn(2+).

The enzyme catalyses RNA(n) + a ribonucleoside 5'-triphosphate = RNA(n+1) + diphosphate. In terms of biological role, DNA-dependent RNA polymerase catalyzes the transcription of DNA into RNA using the four ribonucleoside triphosphates as substrates. The chain is DNA-directed RNA polymerase subunit beta' from Methylobacterium radiotolerans (strain ATCC 27329 / DSM 1819 / JCM 2831 / NBRC 15690 / NCIMB 10815 / 0-1).